Reading from the N-terminus, the 302-residue chain is Homoserine kinase (302 aa).

90 to 100 (KPGSGLGSSSA) lines the ATP pocket.

This sequence belongs to the GHMP kinase family. Homoserine kinase subfamily.

The protein localises to the cytoplasm. It catalyses the reaction L-homoserine + ATP = O-phospho-L-homoserine + ADP + H(+). It participates in amino-acid biosynthesis; L-threonine biosynthesis; L-threonine from L-aspartate: step 4/5. In terms of biological role, catalyzes the ATP-dependent phosphorylation of L-homoserine to L-homoserine phosphate. In Methanococcus vannielii (strain ATCC 35089 / DSM 1224 / JCM 13029 / OCM 148 / SB), this protein is Homoserine kinase.